Consider the following 312-residue polypeptide: R2-like ligand binding oxidase (312 aa).

Mn(2+) is bound by residues Glu-68, Glu-101, and His-104. Residues 71-162 (VTQDIQPFMA…AAQVRASATY (92 aa)) constitute a cross-link (3-(O4'-tyrosyl)-valine (Val-Tyr)). Glu-101 serves as a coordination point for Fe cation. Fe cation-binding residues include Glu-167, Glu-202, and His-205.

It belongs to the ribonucleoside diphosphate reductase small chain family. R2-like ligand binding oxidase subfamily. Homodimer. Fe cation serves as cofactor. The cofactor is Mn(2+).

Probable oxidase that might be involved in lipid metabolism. In Mycobacterium sp. (strain JLS), this protein is R2-like ligand binding oxidase.